The sequence spans 510 residues: ATP synthase subunit alpha (510 aa).

Gly169–Thr176 contributes to the ATP binding site.

Belongs to the ATPase alpha/beta chains family. In terms of assembly, F-type ATPases have 2 components, CF(1) - the catalytic core - and CF(0) - the membrane proton channel. CF(1) has five subunits: alpha(3), beta(3), gamma(1), delta(1), epsilon(1). CF(0) has three main subunits: a(1), b(2) and c(9-12). The alpha and beta chains form an alternating ring which encloses part of the gamma chain. CF(1) is attached to CF(0) by a central stalk formed by the gamma and epsilon chains, while a peripheral stalk is formed by the delta and b chains.

It is found in the cell inner membrane. The enzyme catalyses ATP + H2O + 4 H(+)(in) = ADP + phosphate + 5 H(+)(out). Its function is as follows. Produces ATP from ADP in the presence of a proton gradient across the membrane. The alpha chain is a regulatory subunit. This Nitrobacter winogradskyi (strain ATCC 25391 / DSM 10237 / CIP 104748 / NCIMB 11846 / Nb-255) protein is ATP synthase subunit alpha.